A 450-amino-acid polypeptide reads, in one-letter code: Putative zinc metalloprotease PA3649 (450 aa).

His21 lines the Zn(2+) pocket. Glu22 is an active-site residue. His25 contacts Zn(2+). Residues 97-119 form a helical membrane-spanning segment; it reads IAIVAAGPIANFLLAILFFWVVA. A PDZ domain is found at 199-291; the sequence is GWLKGEDNPD…VLDVALELAV (93 aa). The helical transmembrane segment at 425 to 444 threads the bilayer; it reads AWGMQIGISLVVGVMLLALV.

This sequence belongs to the peptidase M50B family. Requires Zn(2+) as cofactor.

The protein resides in the cell inner membrane. In Pseudomonas aeruginosa (strain ATCC 15692 / DSM 22644 / CIP 104116 / JCM 14847 / LMG 12228 / 1C / PRS 101 / PAO1), this protein is Putative zinc metalloprotease PA3649.